We begin with the raw amino-acid sequence, 174 residues long: Acetolactate synthase small subunit (174 aa).

The ACT domain occupies 4–78 (TLSVLVQDEA…NILNVQDVTN (75 aa)).

Belongs to the acetolactate synthase small subunit family. Dimer of large and small chains.

The protein localises to the plastid. It localises to the chloroplast. The enzyme catalyses 2 pyruvate + H(+) = (2S)-2-acetolactate + CO2. It functions in the pathway amino-acid biosynthesis; L-isoleucine biosynthesis; L-isoleucine from 2-oxobutanoate: step 1/4. The protein operates within amino-acid biosynthesis; L-valine biosynthesis; L-valine from pyruvate: step 1/4. This is Acetolactate synthase small subunit (ilvH) from Pyropia yezoensis (Susabi-nori).